Here is a 98-residue protein sequence, read N- to C-terminus: C-C motif chemokine 19 (98 aa).

Positions methionine 1–serine 21 are cleaved as a signal peptide. 2 disulfides stabilise this stretch: cysteine 29–cysteine 55 and cysteine 30–cysteine 71.

It belongs to the intercrine beta (chemokine CC) family. In terms of assembly, interacts with TNFAIP6 (via Link domain). Expressed at high levels in the lymph nodes, thymus and appendix. Intermediate levels seen in colon and trachea, while low levels found in spleen, small intestine, lung, kidney and stomach.

It is found in the secreted. Its function is as follows. May play a role not only in inflammatory and immunological responses but also in normal lymphocyte recirculation and homing. May play an important role in trafficking of T-cells in thymus, and T-cell and B-cell migration to secondary lymphoid organs. Binds to chemokine receptor CCR7. Recombinant CCL19 shows potent chemotactic activity for T-cells and B-cells but not for granulocytes and monocytes. Binds to atypical chemokine receptor ACKR4 and mediates the recruitment of beta-arrestin (ARRB1/2) to ACKR4. This Homo sapiens (Human) protein is C-C motif chemokine 19 (CCL19).